The sequence spans 213 residues: Glutathione S-transferase DHAR1, mitochondrial (213 aa).

2 residues coordinate glutathione: Lys8 and Asp19. L-ascorbate contacts are provided by Lys8 and Asp19. The 74-residue stretch at 10 to 83 (AVGAPDHLGD…DVIVGILEEK (74 aa)) folds into the GST N-terminal domain. The Nucleophile role is filled by Cys20. Cys20 carries the S-glutathionyl cysteine modification. A Glutathione-binding motif is present at residues 20–25 (CPFSQR). Glutathione is bound by residues Lys47, Val60, and Ser73. The 130-residue stretch at 84–213 (YPDPPLKTPA…ISGWAPKVNP (130 aa)) folds into the GST C-terminal domain. Residues 133–137 (HLKSH) carry the Copper-binding motif. Positions 160 and 207 each coordinate glutathione. Lys210 is a binding site for L-ascorbate.

This sequence belongs to the GST superfamily. DHAR family. As to quaternary structure, monomer. Interacts with copper (Cu). Spontaneous S-glutathionylation in the presence of oxidized glutathione (GSSG). As to expression, expressed at least in roots and leaves.

It localises to the mitochondrion. It is found in the cytoplasm. The protein localises to the cytosol. Its subcellular location is the peroxisome. The protein resides in the membrane. The catalysed reaction is RX + glutathione = an S-substituted glutathione + a halide anion + H(+). The enzyme catalyses L-dehydroascorbate + 2 glutathione = glutathione disulfide + L-ascorbate. Functionally, displays a dual function. As a soluble protein, exhibits glutathione-dependent thiol transferase and dehydroascorbate (DHA) reductase activities. Key component of the ascorbate recycling system. Involved in the redox homeostasis, especially in scavenging of ROS under oxidative stresses, subsequently to biotic or abiotic inducers. As a peripheral membrane protein, could also function as voltage-gated ion channel. The polypeptide is Glutathione S-transferase DHAR1, mitochondrial (Arabidopsis thaliana (Mouse-ear cress)).